A 320-amino-acid chain; its full sequence is Glutathione synthetase (320 aa).

The ATP-grasp domain maps to 130–315 (KIFISWFSRF…ITGILIDYIE (186 aa)). ATP is bound at residue 156–212 (WKEKNDIILKPLDAMGGKGVFRIKKDDPNFSVIVETLTNYEKKYCMIQTYLPEVQFG). 2 residues coordinate Mg(2+): E286 and N288.

Belongs to the prokaryotic GSH synthase family. It depends on Mg(2+) as a cofactor. Mn(2+) serves as cofactor.

The catalysed reaction is gamma-L-glutamyl-L-cysteine + glycine + ATP = glutathione + ADP + phosphate + H(+). It functions in the pathway sulfur metabolism; glutathione biosynthesis; glutathione from L-cysteine and L-glutamate: step 2/2. The polypeptide is Glutathione synthetase (Buchnera aphidicola subsp. Schizaphis graminum (strain Sg)).